A 631-amino-acid chain; its full sequence is uncharacterized protein (631 aa).

Transmembrane regions (helical) follow at residues Val42–Phe62, Ala76–Leu96, Val106–Pro128, Ala152–Trp172, Ala344–Ala364, Ser366–Leu386, Ile398–Phe418, Met429–Ile449, and Ile464–Leu484.

The protein belongs to the YccS/YhfK family.

Its subcellular location is the cell membrane. This is an uncharacterized protein from Bacillus subtilis (strain 168).